A 340-amino-acid polypeptide reads, in one-letter code: Outer membrane protein B (340 aa).

A signal peptide spans 1 to 26; that stretch reads MSSKLVNSLRLTFLSFLGIVSTSLDA.

It belongs to the chlamydial OMP family.

Its subcellular location is the cell outer membrane. This is Outer membrane protein B (ompB) from Chlamydia muridarum (strain MoPn / Nigg).